The primary structure comprises 249 residues: Metallo-beta-lactamase type 2 (249 aa).

The signal sequence occupies residues 1 to 22; that stretch reads MLKKIKISLILALGLTSLQAFG. Residues histidine 98, histidine 100, aspartate 102, histidine 161, and cysteine 180 each coordinate Zn(2+). Lysine 183 serves as a coordination point for substrate. Histidine 222 is a binding site for Zn(2+).

This sequence belongs to the metallo-beta-lactamase superfamily. Class-B beta-lactamase family. As to quaternary structure, monomer. The cofactor is Zn(2+).

The protein resides in the periplasm. It carries out the reaction a beta-lactam + H2O = a substituted beta-amino acid. Inhibited by chelating agents such as EDTA, 1-10 phenanthroline and pyridine-2,6-dicarboxylic acid. Its function is as follows. Confers resistance to the different beta-lactams antibiotics (penicillin, cephalosporin and carbapenem) via the hydrolysis of the beta-lactam ring. In Elizabethkingia meningoseptica (Chryseobacterium meningosepticum), this protein is Metallo-beta-lactamase type 2 (blaB1).